The following is a 1062-amino-acid chain: Probable sucrose-phosphate synthase 3 (1062 aa).

The span at 113 to 122 (EREQGRRDAT) shows a compositional bias: basic and acidic residues. Residues 113 to 141 (EREQGRRDATEDLSEDLSEGEKGDGLGEI) form a disordered region. A phosphoserine mark is found at Ser126, Ser130, and Ser156. Positions 715 to 735 (MDGDKPSLNGSLEPNSADPVK) are disordered.

The protein belongs to the glycosyltransferase 1 family. As to quaternary structure, homodimer or homotetramer.

The catalysed reaction is beta-D-fructose 6-phosphate + UDP-alpha-D-glucose = sucrose 6(F)-phosphate + UDP + H(+). Its pathway is glycan biosynthesis; sucrose biosynthesis; sucrose from D-fructose 6-phosphate and UDP-alpha-D-glucose: step 1/2. Activity is regulated by phosphorylation and moderated by concentration of metabolites and light. Functionally, plays a role in photosynthetic sucrose synthesis by catalyzing the rate-limiting step of sucrose biosynthesis from UDP-glucose and fructose- 6-phosphate. Involved in the regulation of carbon partitioning in the leaves of plants. May regulate the synthesis of sucrose and therefore play a major role as a limiting factor in the export of photoassimilates out of the leaf. Plays a role for sucrose availability that is essential for plant growth and fiber elongation. The chain is Probable sucrose-phosphate synthase 3 (SPS3) from Arabidopsis thaliana (Mouse-ear cress).